Reading from the N-terminus, the 88-residue chain is Small ribosomal subunit protein bS20 (88 aa).

A disordered region spans residues 1 to 27 (MANSKTAKKRAIQSEKRRQHNASRRSM).

Belongs to the bacterial ribosomal protein bS20 family.

In terms of biological role, binds directly to 16S ribosomal RNA. The sequence is that of Small ribosomal subunit protein bS20 from Shewanella amazonensis (strain ATCC BAA-1098 / SB2B).